Consider the following 544-residue polypeptide: Chaperonin GroEL (544 aa).

ATP contacts are provided by residues 29 to 32, K50, 86 to 90, G413, 479 to 481, and D495; these read TLGP, DGTTT, and DAA.

This sequence belongs to the chaperonin (HSP60) family. Forms a cylinder of 14 subunits composed of two heptameric rings stacked back-to-back. Interacts with the co-chaperonin GroES.

It is found in the cytoplasm. It carries out the reaction ATP + H2O + a folded polypeptide = ADP + phosphate + an unfolded polypeptide.. Together with its co-chaperonin GroES, plays an essential role in assisting protein folding. The GroEL-GroES system forms a nano-cage that allows encapsulation of the non-native substrate proteins and provides a physical environment optimized to promote and accelerate protein folding. The chain is Chaperonin GroEL from Borrelia turicatae (strain 91E135).